Here is a 130-residue protein sequence, read N- to C-terminus: Small ribosomal subunit protein uS9 (130 aa).

Residues glycine 102–arginine 130 are disordered. The segment covering lysine 111–arginine 130 has biased composition (basic residues).

This sequence belongs to the universal ribosomal protein uS9 family.

In Finegoldia magna (strain ATCC 29328 / DSM 20472 / WAL 2508) (Peptostreptococcus magnus), this protein is Small ribosomal subunit protein uS9.